The sequence spans 225 residues: MINPTRARRMRYRLAAMAGMPEGKLILLNGGSSAGKTSLALAFQDLAAECWMHIGIDLFWFALPPEQLDLARVRPEYYTWDSAVEADGLEWFTVHPGPILDLAMHSRYRAIRAYLDNGMNVIADDVIWTREWLVDALRVFEGCRVWMVGVHVSDEEGARRELERGDRHPGWNRGSARAAHADAEYDFELDTTATPVHELARELHESYQACPYPMAFNRLRKRFLS.

30-37 (GGSSAGKT) contacts ATP.

To S.violaceus chloramphenicol 3-O phosphotransferase.

The chain is Putative O-phosphotransferase MT2714 from Mycobacterium tuberculosis (strain CDC 1551 / Oshkosh).